A 644-amino-acid polypeptide reads, in one-letter code: Forkhead box protein O (644 aa).

The tract at residues 39-75 (FEPQTRARSNTWPCPRPENFVEPPDELDSTKASNQQL) is disordered. Threonine 49 carries the phosphothreonine; by PKB/AKT1 modification. Serine 80 is modified (phosphoserine). Residues 100 to 206 (WGNLSYADLI…ETSRYEKRRG (107 aa)) constitute a DNA-binding region (fork-head). Disordered regions lie at residues 187–210 (KSVR…RAKK), 222–276 (GLND…SPIR), 329–386 (QQQQ…QTLQ), 412–435 (SPNS…DSLN), and 578–612 (QQHL…NSSL). Serine 195 is modified (phosphoserine; by PKB/AKT1). Polar residues-rich tracts occupy residues 226–235 (ATPSPSSSVS) and 261–270 (RASSNASSCG). Serine 264 carries the post-translational modification Phosphoserine; by PKB/AKT1. Serine 267, serine 268, and serine 273 each carry phosphoserine. Residues 329-340 (QQQQQQQQQQQQ) show a composition bias toward low complexity. Residues 350–359 (SQPPPPPYQP) are compositionally biased toward pro residues. Residues 360 to 374 (PQLQQQQQQQPSYSL) show a composition bias toward low complexity. Over residues 412-421 (SPNSVTTTMS) the composition is skewed to polar residues.

Interacts with melt.

Its subcellular location is the cytoplasm. It localises to the nucleus. Functionally, transcription factor involved in the regulation of the insulin signaling pathway. Consistently activates both the downstream target Thor\d4EBP and the feedback control target InR. Involved in negative regulation of the cell cycle, modulating cell growth and proliferation. In response to cellular stresses, such as nutrient deprivation or increased levels of reactive oxygen species, foxo is activated and inhibits growth through the action of target genes such as Thor. Foxo activated in the adult fat body can regulate lifespan in adults; an insulin peptide itself may function as one secondary messenger of insulin-regulated aging. Also regulates Lip4, homolog of human acid lipases, thereby acting as a key modulator of lipid metabolism by insulin signaling and integrates insulin responses to glucose and lipid homeostasis. This Drosophila pseudoobscura pseudoobscura (Fruit fly) protein is Forkhead box protein O.